The chain runs to 831 residues: DNA ligase (831 aa).

Residues 34 to 38 (DADYD), 83 to 84 (SL), and Glu-114 each bind NAD(+). Lys-116 serves as the catalytic N6-AMP-lysine intermediate. Residues Arg-137, Glu-174, Lys-291, and Lys-315 each coordinate NAD(+). The Zn(2+) site is built by Cys-409, Cys-412, Cys-427, and Cys-433. The BRCT domain occupies 749–831 (AHTAPLNGQS…LDFLEQYSAQ (83 aa)).

It belongs to the NAD-dependent DNA ligase family. LigA subfamily. Requires Mg(2+) as cofactor. Mn(2+) serves as cofactor.

The catalysed reaction is NAD(+) + (deoxyribonucleotide)n-3'-hydroxyl + 5'-phospho-(deoxyribonucleotide)m = (deoxyribonucleotide)n+m + AMP + beta-nicotinamide D-nucleotide.. Functionally, DNA ligase that catalyzes the formation of phosphodiester linkages between 5'-phosphoryl and 3'-hydroxyl groups in double-stranded DNA using NAD as a coenzyme and as the energy source for the reaction. It is essential for DNA replication and repair of damaged DNA. In Xylella fastidiosa (strain M12), this protein is DNA ligase.